The primary structure comprises 348 residues: Transmembrane protease serine 12 (348 aa).

An N-terminal signal peptide occupies residues M1–S20. Over D21–G324 the chain is Extracellular. Residues S24–A46 are disordered. Residues I78 to F318 enclose the Peptidase S1 domain. A disulfide bridge connects residues C107 and C123. Catalysis depends on charge relay system residues H122 and D171. 3 disulfide bridges follow: C206–C274, C237–C253, and C264–C294. N219 and N249 each carry an N-linked (GlcNAc...) asparagine glycan. The active-site Charge relay system is S268. Residues I325–L345 traverse the membrane as a helical segment. Over A346–T348 the chain is Cytoplasmic.

It belongs to the peptidase S1 family. In testis, expressed in spermatocytes and spermatids (at protein level).

Its subcellular location is the cell membrane. The protein localises to the cytoplasmic vesicle. It localises to the secretory vesicle. The protein resides in the acrosome. Required for male fertility. Plays a critical role in sperm capacitation and acrosome reactions during fertilization, and also plays a role in the regulation of proteins involved in spermatogenesis. Regulates protein pathways that promote chromosomal synapsis formation, double-strand break repair, formation of the inner mitochondrial membrane cristae and apoptosis in developing sperm. Required for normal sperm motility and binding to the zona pellucida, potentially via a role in ADAM3 protein maturation. The polypeptide is Transmembrane protease serine 12 (Homo sapiens (Human)).